A 71-amino-acid polypeptide reads, in one-letter code: Vitellogenin-A1 (71 aa).

Residues Met-1–Ser-15 form the signal peptide. The region spanning Phe-24–Lys-71 is the Vitellogenin domain.

In terms of tissue distribution, produced by the liver, secreted into the blood and then sequestered by receptor mediated endocytosis into growing oocytes, where it is generally cleaved, giving rise to the respective yolk components.

Precursor of the major egg-yolk proteins that are sources of nutrients during early development of oviparous organisms. This is Vitellogenin-A1 from Xenopus laevis (African clawed frog).